Here is a 170-residue protein sequence, read N- to C-terminus: Large ribosomal subunit protein uL11 (170 aa).

Belongs to the universal ribosomal protein uL11 family. In terms of assembly, part of the ribosomal stalk of the 50S ribosomal subunit. Interacts with L10 and the large rRNA to form the base of the stalk. L10 forms an elongated spine to which L12 dimers bind in a sequential fashion forming a multimeric L10(L12)X complex.

Functionally, forms part of the ribosomal stalk which helps the ribosome interact with GTP-bound translation factors. In Saccharolobus islandicus (strain M.16.27) (Sulfolobus islandicus), this protein is Large ribosomal subunit protein uL11.